The primary structure comprises 567 residues: Proton-coupled zinc antiporter SLC30A9, mitochondrial (567 aa).

The next 5 helical transmembrane spans lie at 238-258 (VVMVAICINGLNCFFKFLAWI), 313-333 (GVGIFMMGAGLSWYHGIMGLL), 341-361 (LLWAYCILAGSLVSEGATLLV), 391-411 (VILLEDTAAVLGVIIAATCMG), and 423-443 (SLGSLGVGTLLGVVSAFLIYT). Residues 461 to 465 (LTELL) carry the LXXLL motif motif.

The protein belongs to the cation diffusion facilitator (CDF) transporter (TC 2.A.4) family. SLC30A subfamily. As to quaternary structure, interacts with GRIP1, ESR1, AR and CTNNB1.

It is found in the mitochondrion membrane. The protein localises to the nucleus. The protein resides in the endoplasmic reticulum. The catalysed reaction is Zn(2+)(in) + 2 H(+)(out) = Zn(2+)(out) + 2 H(+)(in). Functionally, acts as a zinc transporter involved in intracellular zinc homeostasis. Functions as a secondary coactivator for nuclear receptors by cooperating with p160 coactivators subtypes. Plays a role in transcriptional activation of Wnt-responsive genes. Its function is as follows. Mitochondrial proton-coupled zinc ion antiporter mediating the export of zinc from the mitochondria and involved in zinc homeostasis, zinc mobilization as well as mitochondrial morphology and health. In nucleus, functions as a secondary coactivator for nuclear receptors by cooperating with p160 coactivators subtypes. Plays a role in transcriptional activation of Wnt-responsive genes. The protein is Proton-coupled zinc antiporter SLC30A9, mitochondrial (Slc30a9) of Mus musculus (Mouse).